A 650-amino-acid chain; its full sequence is Epithelial sodium channel subunit beta (650 aa).

The Cytoplasmic portion of the chain corresponds to 1-95; sequence MLLHINPAYL…IICEGPKKKA (95 aa). Residues 96–116 traverse the membrane as a helical segment; that stretch reads MWFLLTLLFTALVCWQWGIFI. Residues 117 to 542 are Extracellular-facing; the sequence is RTYLSWEVSV…GGQFGFWMGG (426 aa). 5 disulfides stabilise this stretch: Cys-143–Cys-317, Cys-229–Cys-234, Cys-241–Cys-248, Cys-294–Cys-301, and Cys-406–Cys-458. An N-linked (GlcNAc...) asparagine glycan is attached at Asn-244. Asn-305 carries N-linked (GlcNAc...) asparagine glycosylation. A helical membrane pass occupies residues 543 to 563; it reads SVLCLIEFGEIIIDFVWITII. Residues 564–650 lie on the Cytoplasmic side of the membrane; it reads KLVALAKSLR…IESDSEGDAI (87 aa). The interval 600 to 650 is disordered; the sequence is FQPDTAPRSPNTGPYPNEQALPIPGTPPPNYDSLRLQPLDVIESDSEGDAI. The short motif at 626 to 630 is the PY motif; recruits WW domain-containing proteins and is thereby required for ubiquitination and inhibition of the channel by NEDD4 and NEDD4L element; sequence PPPNY. The segment covering 641 to 650 has biased composition (acidic residues); it reads IESDSEGDAI. A phosphoserine mark is found at Ser-643 and Ser-645.

This sequence belongs to the amiloride-sensitive sodium channel (TC 1.A.6) family. SCNN1B subfamily. Component of the heterotrimeric epithelial sodium channel (ENaC) composed of an alpha/SCNN1A, a beta/SCNN1B and a gamma/SCNN1G subunit. An additional delta/SCNN1D subunit can replace the alpha/SCNN1A subunit to form an alternative channel with specific properties. Interacts with WWP1 (via WW domains). Interacts with WWP2 (via WW domains); inhibits the channel. Interacts with the full-length immature form of PCSK9 (pro-PCSK9). Interacts (N-glycosylated) with BPIFA1; the interaction is direct and inhibits the proteolytic processing of SCNN1A and SCNN1G and the activation of ENaC. In terms of processing, ubiquitinated. Can be ubiquitinated at multiple sites and undergo monoubiquitination and polyubiquitination. Ubiquitination by NEDD4 or NEDD4L inhibits the ENaC channel through endocytosis, intracellular retention and degradation of its individual subunits. However, some studies could not confirm the ubiquitination of this subunit of the ENaC. Phosphorylated on serine and threonine residues. Aldosterone and insulin increase the basal level of phosphorylation. Post-translationally, N-glycosylated. N-glycosylation is required for interaction with BPIFA1.

It localises to the apical cell membrane. The protein localises to the cytoplasmic vesicle membrane. The enzyme catalyses Na(+)(in) = Na(+)(out). Its activity is regulated as follows. Originally identified and characterized by its inhibition by the diuretic drug amiloride. Its function is as follows. This is one of the three pore-forming subunits of the heterotrimeric epithelial sodium channel (ENaC), a critical regulator of sodium balance and fluid homeostasis. ENaC operates in epithelial tissues, where it mediates the electrodiffusion of sodium ions from extracellular fluid through the apical membrane of cells, with water following osmotically. It plays a key role in maintaining sodium homeostasis through electrogenic sodium reabsorption in the kidneys. Additionally, ENaC is essential for airway surface liquid homeostasis, which is crucial for proper mucus clearance. The sequence is that of Epithelial sodium channel subunit beta from Pan troglodytes (Chimpanzee).